Reading from the N-terminus, the 208-residue chain is V-type ATP synthase subunit E (208 aa).

This sequence belongs to the V-ATPase E subunit family.

Its function is as follows. Produces ATP from ADP in the presence of a proton gradient across the membrane. The polypeptide is V-type ATP synthase subunit E (atpE) (Chlamydia muridarum (strain MoPn / Nigg)).